A 35-amino-acid polypeptide reads, in one-letter code: Dermonecrotic toxin LrSicTox-alphaI-1 (35 aa).

Histidine 11 is an active-site residue. Residue aspartate 33 coordinates Mg(2+).

This sequence belongs to the arthropod phospholipase D family. Class II subfamily. It depends on Mg(2+) as a cofactor. In terms of processing, contains 2 disulfide bonds. In terms of tissue distribution, expressed by the venom gland.

It is found in the secreted. It catalyses the reaction an N-(acyl)-sphingosylphosphocholine = an N-(acyl)-sphingosyl-1,3-cyclic phosphate + choline. The catalysed reaction is an N-(acyl)-sphingosylphosphoethanolamine = an N-(acyl)-sphingosyl-1,3-cyclic phosphate + ethanolamine. It carries out the reaction a 1-acyl-sn-glycero-3-phosphocholine = a 1-acyl-sn-glycero-2,3-cyclic phosphate + choline. The enzyme catalyses a 1-acyl-sn-glycero-3-phosphoethanolamine = a 1-acyl-sn-glycero-2,3-cyclic phosphate + ethanolamine. Functionally, dermonecrotic toxins cleave the phosphodiester linkage between the phosphate and headgroup of certain phospholipids (sphingolipid and lysolipid substrates), forming an alcohol (often choline) and a cyclic phosphate. This toxin acts on sphingomyelin (SM). It may also act on ceramide phosphoethanolamine (CPE), lysophosphatidylcholine (LPC) and lysophosphatidylethanolamine (LPE), but not on lysophosphatidylserine (LPS), and lysophosphatidylglycerol (LPG). It acts by transphosphatidylation, releasing exclusively cyclic phosphate products as second products. Induces dermonecrosis, hemolysis, increased vascular permeability, edema, inflammatory response, and platelet aggregation. The chain is Dermonecrotic toxin LrSicTox-alphaI-1 from Loxosceles reclusa (Brown recluse spider).